A 622-amino-acid chain; its full sequence is MNLCSSSGATASNTSLSSTGHPESNGSGPSEATHCFGGGGGGGGNNAGGGSGTDTAPNSNKGTLNGGGSGGGGGANPASSNGHSLTHNNENNGNMPPETRPKMVTVKHPESNKPKPTTKKIVKNIQADQDVIKALQRCRDEGIKRLDLSKSSITVLPNTVRECVHLTELYLYSNKIGQLPTEIGCLVNLRNLALNENSLTSLPESLKHCTQLKVLDLRHNKLAEIPSVIYRLRSLTTLYLRFNRITTVADDLRQLVNLTMLSLRENKIKELGSAIGALVNLTTLDVSHNHLEHLPEDIGNCVNLSALDLQHNELLDIPDSIGNLKSLVRLGLRYNRLNCVPVSLKNCKSMDEFNVEGNGITQLPDGMLASLSALTSITLSRNQFTSYPTGGPAQFTNVYSINLEHNRIDKIPYGIFSRAKGLTKLNMKENMLTALPLDVGTWVNMVELNLATNALQKLPDDIMNLQNLEILILSNNMLKKIPNTIGNLRKLRILDLEENRIEVLPHEIGLLHELQRLILQTNQITMLPRSVGHLSNLTHLSVSENNLQFLPEEIGSLESLENLYINQNPGLEKLPFELALCQNLKYLNIDKCPLGTIPPEIQAGGPSLVLQWLKMHSPYRQM.

Positions 1 to 30 (MNLCSSSGATASNTSLSSTGHPESNGSGPS) are enriched in polar residues. The disordered stretch occupies residues 1–117 (MNLCSSSGAT…HPESNKPKPT (117 aa)). Gly residues-rich tracts occupy residues 36 to 52 (FGGG…GGSG) and 64 to 75 (LNGGGSGGGGGA). Residues 85–94 (LTHNNENNGN) are compositionally biased toward polar residues. 20 LRR repeats span residues 142-163 (GIKR…VREC), 165-186 (HLTE…IGCL), 188-209 (NLRN…LKHC), 211-232 (QLKV…IYRL), 234-255 (SLTT…LRQL), 257-278 (NLTM…IGAL), 280-301 (NLTT…IGNC), 303-324 (NLSA…IGNL), 326-348 (SLVR…KNCK), 349-370 (SMDE…MLAS), 373-394 (ALTS…GPAQ), 397-418 (NVYS…IFSR), 421-442 (GLTK…VGTW), 444-465 (NMVE…IMNL), 467-488 (NLEI…IGNL), 490-511 (KLRI…IGLL), 513-534 (ELQR…VGHL), 536-557 (NLTH…IGSL), 559-581 (SLEN…LALC), and 583-604 (NLKY…IQAG).

It belongs to the SHOC2 family.

Its function is as follows. Acts as a Ras effector and participates in MAPK pathway activation. Probably acts as a regulatory subunit of protein phosphatase that specifically dephosphorylates Raf kinase and stimulate Raf activity at specialized signaling complexes upon Ras activation. This is Leucine-rich repeat protein soc-2 homolog (Sur-8) from Drosophila grimshawi (Hawaiian fruit fly).